Consider the following 141-residue polypeptide: MAVEQTFSIIKPDAVKNNHIGAIVARFEKAGLKVIAQRMLQLTPAQAEGFYAEHKGRSFYDELVAFMTSGPVVVQVLYGENAIALNRELMGATDPTKAAPGTIRADFSMSMPANAVHGSDSPISAAREIAYFFPTHEVVVR.

ATP-binding residues include K11, F59, R87, T93, R104, and N114. H117 acts as the Pros-phosphohistidine intermediate in catalysis.

Belongs to the NDK family. In terms of assembly, homotetramer. The cofactor is Mg(2+).

It is found in the cytoplasm. It carries out the reaction a 2'-deoxyribonucleoside 5'-diphosphate + ATP = a 2'-deoxyribonucleoside 5'-triphosphate + ADP. The enzyme catalyses a ribonucleoside 5'-diphosphate + ATP = a ribonucleoside 5'-triphosphate + ADP. In terms of biological role, major role in the synthesis of nucleoside triphosphates other than ATP. The ATP gamma phosphate is transferred to the NDP beta phosphate via a ping-pong mechanism, using a phosphorylated active-site intermediate. The protein is Nucleoside diphosphate kinase of Cellvibrio japonicus (strain Ueda107) (Pseudomonas fluorescens subsp. cellulosa).